Reading from the N-terminus, the 95-residue chain is Large ribosomal subunit protein uL22c (95 aa).

The protein belongs to the universal ribosomal protein uL22 family. In terms of assembly, part of the 50S ribosomal subunit.

The protein resides in the plastid. The protein localises to the chloroplast. Its function is as follows. This protein binds specifically to 23S rRNA. Functionally, the globular domain of the protein is located near the polypeptide exit tunnel on the outside of the subunit, while an extended beta-hairpin is found that lines the wall of the exit tunnel in the center of the 70S ribosome. This is Large ribosomal subunit protein uL22c (rpl22) from Cyanidioschyzon merolae (strain NIES-3377 / 10D) (Unicellular red alga).